The primary structure comprises 580 residues: tRNA-guanine(15) transglycosylase (580 aa).

The active-site Nucleophile is Asp-91. Substrate-binding residues include Asp-126 and Ala-192. The Zn(2+) site is built by Cys-275, Cys-277, and Cys-280. In terms of domain architecture, PUA spans 504–579; sequence RMRVVVDEDA…LAVKVRRGVE (76 aa).

The protein belongs to the archaeosine tRNA-ribosyltransferase family. Zn(2+) is required as a cofactor.

It carries out the reaction guanosine(15) in tRNA + 7-cyano-7-deazaguanine = 7-cyano-7-carbaguanosine(15) in tRNA + guanine. It functions in the pathway tRNA modification; archaeosine-tRNA biosynthesis. Exchanges the guanine residue with 7-cyano-7-deazaguanine (preQ0) at position 15 in the dihydrouridine loop (D-loop) of archaeal tRNAs. The polypeptide is tRNA-guanine(15) transglycosylase (Thermococcus onnurineus (strain NA1)).